The primary structure comprises 71 residues: DNA-directed RNA polymerase subunit epsilon (71 aa).

Belongs to the RNA polymerase subunit epsilon family. In terms of assembly, RNAP is composed of a core of 2 alpha, a beta and a beta' subunit. The core is associated with a delta subunit, and at least one of epsilon or omega. When a sigma factor is associated with the core the holoenzyme is formed, which can initiate transcription.

It carries out the reaction RNA(n) + a ribonucleoside 5'-triphosphate = RNA(n+1) + diphosphate. In terms of biological role, a non-essential component of RNA polymerase (RNAP). The protein is DNA-directed RNA polymerase subunit epsilon of Geobacillus thermodenitrificans (strain NG80-2).